A 456-amino-acid chain; its full sequence is tRNA-2-methylthio-N(6)-dimethylallyladenosine synthase (456 aa).

Residues 13 to 129 (RYLYVRTFGC…IASLLEEVER (117 aa)) enclose the MTTase N-terminal domain. Positions 22, 58, 92, 168, 172, and 175 each coordinate [4Fe-4S] cluster. In terms of domain architecture, Radical SAM core spans 154–384 (GTGDVVAQVT…QSIQADITLQ (231 aa)). The TRAM domain occupies 387 to 450 (LAETGTVREV…SHSLKGELLS (64 aa)).

It belongs to the methylthiotransferase family. MiaB subfamily. In terms of assembly, monomer. The cofactor is [4Fe-4S] cluster.

It localises to the cytoplasm. The enzyme catalyses N(6)-dimethylallyladenosine(37) in tRNA + (sulfur carrier)-SH + AH2 + 2 S-adenosyl-L-methionine = 2-methylsulfanyl-N(6)-dimethylallyladenosine(37) in tRNA + (sulfur carrier)-H + 5'-deoxyadenosine + L-methionine + A + S-adenosyl-L-homocysteine + 2 H(+). Functionally, catalyzes the methylthiolation of N6-(dimethylallyl)adenosine (i(6)A), leading to the formation of 2-methylthio-N6-(dimethylallyl)adenosine (ms(2)i(6)A) at position 37 in tRNAs that read codons beginning with uridine. The polypeptide is tRNA-2-methylthio-N(6)-dimethylallyladenosine synthase (Syntrophobacter fumaroxidans (strain DSM 10017 / MPOB)).